The chain runs to 217 residues: Uracil-DNA glycosylase (217 aa).

The active-site Proton acceptor is Asp-62.

Belongs to the uracil-DNA glycosylase (UDG) superfamily. UNG family.

It localises to the cytoplasm. The enzyme catalyses Hydrolyzes single-stranded DNA or mismatched double-stranded DNA and polynucleotides, releasing free uracil.. Its function is as follows. Excises uracil residues from the DNA which can arise as a result of misincorporation of dUMP residues by DNA polymerase or due to deamination of cytosine. The protein is Uracil-DNA glycosylase of Streptococcus equi subsp. equi (strain 4047).